The chain runs to 217 residues: Ribonuclease T (217 aa).

Residues 20–194 (VVIDVETGGF…YDTDRTAELF (175 aa)) enclose the Exonuclease domain. Residues Asp-23, Glu-25, His-181, and Asp-186 each coordinate Mg(2+). The Proton donor/acceptor role is filled by His-181.

This sequence belongs to the RNase T family. As to quaternary structure, homodimer. Mg(2+) is required as a cofactor.

In terms of biological role, trims short 3' overhangs of a variety of RNA species, leaving a one or two nucleotide 3' overhang. Responsible for the end-turnover of tRNA: specifically removes the terminal AMP residue from uncharged tRNA (tRNA-C-C-A). Also appears to be involved in tRNA biosynthesis. This is Ribonuclease T from Photorhabdus laumondii subsp. laumondii (strain DSM 15139 / CIP 105565 / TT01) (Photorhabdus luminescens subsp. laumondii).